The chain runs to 152 residues: Small ribosomal subunit protein uS15 (152 aa).

The tract at residues 1–20 (MNKRRANGSSHSTRPVRTGS) is disordered.

The protein belongs to the universal ribosomal protein uS15 family. Part of the 30S ribosomal subunit.

This Metallosphaera sedula (strain ATCC 51363 / DSM 5348 / JCM 9185 / NBRC 15509 / TH2) protein is Small ribosomal subunit protein uS15.